The primary structure comprises 847 residues: Guanine nucleotide exchange factor VAV3 (847 aa).

The region spanning 1 to 119 (MEPWKQCAQW…ETLSRLSRTP (119 aa)) is the Calponin-homology (CH) domain. Phosphotyrosine is present on Tyr141. Positions 192-371 (IRSCCLAEIR…KDLAQYVNEV (180 aa)) constitute a DH domain. Residues 400 to 502 (RPQGDGEIRI…WLEQFEMALS (103 aa)) form the PH domain. A Phorbol-ester/DAG-type zinc finger spans residues 513 to 562 (FHDFKMHTFTRVTSCRVCQMLLRGTFYQGYLCFKCGAKAHKECLGRVDNC). Residues 560 to 847 (DNCGRVNSVE…FPSTYVEEDE (288 aa)) are sufficient for interaction with ROS1. The 69-residue stretch at 592–660 (PGLPKMQVIR…PSDAVKPSPC (69 aa)) folds into the SH3 1 domain. Positions 672-766 (WYAGPMERLQ…TLDTTLQFPY (95 aa)) constitute an SH2 domain. In terms of domain architecture, SH3 2 spans 788-847 (KVLGIAIARYDFCARDMRELSLLKGDMVKIYTKMSANGWWRGEVNGRVGWFPSTYVEEDE).

In terms of assembly, interacts with the PH domain of APS. Interacts with ROS1; constitutive interaction that mediates VAV3 phosphorylation. Interacts (via SH2 domains) with the phosphorylated form of EPHA2. Post-translationally, phosphorylated. Phosphorylation can be mediated by ROS1. In osteoclasts, undergoes tyrosine phosphorylation in response to CSF1. As to expression, abundantly expressed in osteoclasts and mature osteoblasts. Also expressed in bone marrow macrophages (at protein level):.

Functionally, exchange factor for GTP-binding proteins RhoA, RhoG and, to a lesser extent, Rac1. Binds physically to the nucleotide-free states of those GTPases. Plays an important role in angiogenesis. Its recruitment by phosphorylated EPHA2 is critical for EFNA1-induced RAC1 GTPase activation and vascular endothelial cell migration and assembly. May be important for integrin-mediated signaling, at least in some cell types. In osteoclasts, along with SYK tyrosine kinase, required for signaling through integrin alpha-v/beta-1 (ITAGV-ITGB1), a crucial event for osteoclast proper cytoskeleton organization and function. This signaling pathway involves RAC1, but not RHO, activation. Necessary for proper wound healing. In the course of wound healing, required for the phagocytotic cup formation preceding macrophage phagocytosis of apoptotic neutrophils. Responsible for integrin beta-2-mediated macrophage adhesion and, to a lesser extent, contributes to beta-3-mediated adhesion. Does not affect integrin beta-1-mediated adhesion. The chain is Guanine nucleotide exchange factor VAV3 (Vav3) from Mus musculus (Mouse).